The primary structure comprises 760 residues: Xaa-Pro dipeptidyl-peptidase (760 aa).

Residues Ser-349, Asp-469, and His-499 each act as charge relay system in the active site.

The protein belongs to the peptidase S15 family. In terms of assembly, homodimer.

The protein localises to the cytoplasm. It carries out the reaction Hydrolyzes Xaa-Pro-|- bonds to release unblocked, N-terminal dipeptides from substrates including Ala-Pro-|-p-nitroanilide and (sequentially) Tyr-Pro-|-Phe-Pro-|-Gly-Pro-|-Ile.. In terms of biological role, removes N-terminal dipeptides sequentially from polypeptides having unsubstituted N-termini provided that the penultimate residue is proline. The protein is Xaa-Pro dipeptidyl-peptidase of Streptococcus pyogenes serotype M5 (strain Manfredo).